The primary structure comprises 383 residues: Chromatin structure-remodeling complex subunit SFH1 (383 aa).

Positions 61–80 (DDDEKVHSDNGKGEGEEVGH) are disordered. Positions 64 to 80 (EKVHSDNGKGEGEEVGH) are enriched in basic and acidic residues.

The protein belongs to the SNF5 family.

The protein resides in the nucleus. In terms of biological role, part of the chromatin structure-remodeling complex (RSC) which is involved in transcription regulation and nucleosome positioning. RSC is responsible for the transfer of a histone octamer from a nucleosome core particle to naked DNA. The reaction requires ATP and involves an activated RSC-nucleosome intermediate. Remodeling reaction also involves DNA translocation, DNA twist and conformational change. As a reconfigurer of centromeric and flanking nucleosomes, RSC complex is required both for proper kinetochore function in chromosome segregation and, via a PKC1-dependent signaling pathway, for organization of the cellular cytoskeleton. This subunit is essential for mitotic growth and required for cell cycle progression. The polypeptide is Chromatin structure-remodeling complex subunit SFH1 (SFH1) (Eremothecium gossypii (strain ATCC 10895 / CBS 109.51 / FGSC 9923 / NRRL Y-1056) (Yeast)).